Consider the following 450-residue polypeptide: ATP-dependent RNA helicase FAL1 (450 aa).

Residues 25–53 (PTFEDMHLKENLLRGIYAYGYESPSAVQS) carry the Q motif motif. The Helicase ATP-binding domain occupies 56–226 (IVQICKGRDT…TKFMTDPVRI (171 aa)). 69-76 (AQSGTGKT) contributes to the ATP binding site. Residues 174–177 (DEAD) carry the DEAD box motif. Residues 237–398 (GLKQYFIAVE…EMPMNGTLFY (162 aa)) form the Helicase C-terminal domain.

The protein belongs to the DEAD box helicase family. DDX48/FAL1 subfamily.

It is found in the nucleus. The protein resides in the nucleolus. It catalyses the reaction ATP + H2O = ADP + phosphate + H(+). Its function is as follows. ATP-dependent RNA helicase involved in 40S ribosomal subunit biogenesis. Required for the processing and cleavage of 35S pre-rRNA at sites A0, A1, and A2, leading to mature 18S rRNA. The polypeptide is ATP-dependent RNA helicase FAL1 (FAL1) (Ajellomyces capsulatus (strain NAm1 / WU24) (Darling's disease fungus)).